Here is a 429-residue protein sequence, read N- to C-terminus: Histidine--tRNA ligase (429 aa).

It belongs to the class-II aminoacyl-tRNA synthetase family. Homodimer.

Its subcellular location is the cytoplasm. The enzyme catalyses tRNA(His) + L-histidine + ATP = L-histidyl-tRNA(His) + AMP + diphosphate + H(+). The polypeptide is Histidine--tRNA ligase (Prochlorococcus marinus subsp. pastoris (strain CCMP1986 / NIES-2087 / MED4)).